A 218-amino-acid chain; its full sequence is Small ribosomal subunit protein uS3 (218 aa).

Positions 38-106 constitute a KH type-2 domain; the sequence is IREFINQRLS…RVHINILEIK (69 aa).

This sequence belongs to the universal ribosomal protein uS3 family. As to quaternary structure, part of the 30S ribosomal subunit. Forms a tight complex with proteins S10 and S14.

Binds the lower part of the 30S subunit head. Binds mRNA in the 70S ribosome, positioning it for translation. The chain is Small ribosomal subunit protein uS3 from Bacillus licheniformis (strain ATCC 14580 / DSM 13 / JCM 2505 / CCUG 7422 / NBRC 12200 / NCIMB 9375 / NCTC 10341 / NRRL NRS-1264 / Gibson 46).